Consider the following 359-residue polypeptide: 3-dehydroquinate synthase (359 aa).

NAD(+)-binding positions include 71-76 (DGEQYK), 105-109 (GVIGD), 129-130 (TT), Lys142, Lys151, and 169-172 (CLKT). The Zn(2+) site is built by Glu184, His247, and His264.

Belongs to the sugar phosphate cyclases superfamily. Dehydroquinate synthase family. Co(2+) is required as a cofactor. It depends on Zn(2+) as a cofactor. The cofactor is NAD(+).

Its subcellular location is the cytoplasm. It catalyses the reaction 7-phospho-2-dehydro-3-deoxy-D-arabino-heptonate = 3-dehydroquinate + phosphate. It participates in metabolic intermediate biosynthesis; chorismate biosynthesis; chorismate from D-erythrose 4-phosphate and phosphoenolpyruvate: step 2/7. In terms of biological role, catalyzes the conversion of 3-deoxy-D-arabino-heptulosonate 7-phosphate (DAHP) to dehydroquinate (DHQ). The sequence is that of 3-dehydroquinate synthase from Shewanella amazonensis (strain ATCC BAA-1098 / SB2B).